Reading from the N-terminus, the 337-residue chain is Phenylalanine--tRNA ligase alpha subunit (337 aa).

E258 is a Mg(2+) binding site.

It belongs to the class-II aminoacyl-tRNA synthetase family. Phe-tRNA synthetase alpha subunit type 1 subfamily. Tetramer of two alpha and two beta subunits. It depends on Mg(2+) as a cofactor.

The protein resides in the cytoplasm. It catalyses the reaction tRNA(Phe) + L-phenylalanine + ATP = L-phenylalanyl-tRNA(Phe) + AMP + diphosphate + H(+). In Burkholderia thailandensis (strain ATCC 700388 / DSM 13276 / CCUG 48851 / CIP 106301 / E264), this protein is Phenylalanine--tRNA ligase alpha subunit.